The sequence spans 544 residues: CTP synthase (544 aa).

Residues 1–267 (MAKFVFITGG…CREVLDVLDL (267 aa)) are amidoligase domain. Ser13 provides a ligand contact to CTP. Position 13 (Ser13) interacts with UTP. ATP is bound by residues 14–19 (SIGKGI) and Asp71. The Mg(2+) site is built by Asp71 and Glu141. CTP is bound by residues 148-150 (DIE), 188-193 (KTKPTQ), and Lys224. UTP-binding positions include 188 to 193 (KTKPTQ) and Lys224. The Glutamine amidotransferase type-1 domain maps to 292 to 534 (KVALVGKYIQ…IEAAQQRLPS (243 aa)). Gly354 contacts L-glutamine. Catalysis depends on Cys381, which acts as the Nucleophile; for glutamine hydrolysis. Residues 382–385 (LGMQ), Glu405, and Arg462 each bind L-glutamine. Active-site residues include His507 and Glu509.

The protein belongs to the CTP synthase family. Homotetramer.

The enzyme catalyses UTP + L-glutamine + ATP + H2O = CTP + L-glutamate + ADP + phosphate + 2 H(+). The catalysed reaction is L-glutamine + H2O = L-glutamate + NH4(+). It carries out the reaction UTP + NH4(+) + ATP = CTP + ADP + phosphate + 2 H(+). It functions in the pathway pyrimidine metabolism; CTP biosynthesis via de novo pathway; CTP from UDP: step 2/2. With respect to regulation, allosterically activated by GTP, when glutamine is the substrate; GTP has no effect on the reaction when ammonia is the substrate. The allosteric effector GTP functions by stabilizing the protein conformation that binds the tetrahedral intermediate(s) formed during glutamine hydrolysis. Inhibited by the product CTP, via allosteric rather than competitive inhibition. Catalyzes the ATP-dependent amination of UTP to CTP with either L-glutamine or ammonia as the source of nitrogen. Regulates intracellular CTP levels through interactions with the four ribonucleotide triphosphates. This Parasynechococcus marenigrum (strain WH8102) protein is CTP synthase.